The chain runs to 245 residues: 4-hydroxy-tetrahydrodipicolinate reductase (245 aa).

NAD(+)-binding positions include 7–12 (GAKGKV), 75–77 (GTT), and 102–105 (APNF). The active-site Proton donor/acceptor is the histidine 132. Histidine 133 provides a ligand contact to (S)-2,3,4,5-tetrahydrodipicolinate. The active-site Proton donor is the lysine 136. A (S)-2,3,4,5-tetrahydrodipicolinate-binding site is contributed by 142–143 (GT).

It belongs to the DapB family.

The protein localises to the cytoplasm. The catalysed reaction is (S)-2,3,4,5-tetrahydrodipicolinate + NAD(+) + H2O = (2S,4S)-4-hydroxy-2,3,4,5-tetrahydrodipicolinate + NADH + H(+). It carries out the reaction (S)-2,3,4,5-tetrahydrodipicolinate + NADP(+) + H2O = (2S,4S)-4-hydroxy-2,3,4,5-tetrahydrodipicolinate + NADPH + H(+). The protein operates within amino-acid biosynthesis; L-lysine biosynthesis via DAP pathway; (S)-tetrahydrodipicolinate from L-aspartate: step 4/4. Its function is as follows. Catalyzes the conversion of 4-hydroxy-tetrahydrodipicolinate (HTPA) to tetrahydrodipicolinate. The protein is 4-hydroxy-tetrahydrodipicolinate reductase of Mycobacterium ulcerans (strain Agy99).